An 801-amino-acid chain; its full sequence is Endonuclease MutS2 (801 aa).

336-343 (GPNTGGKT) contacts ATP. Residues 696–721 (AQQSKAKQKQQKIVKTKTASGSARAT) form a disordered region. Basic residues predominate over residues 701 to 710 (AKQKQQKIVK). Positions 726-801 (LDLRGVRYEA…GDGATIAELS (76 aa)) constitute a Smr domain.

It belongs to the DNA mismatch repair MutS family. MutS2 subfamily. As to quaternary structure, homodimer. Binds to stalled ribosomes, contacting rRNA.

Functionally, endonuclease that is involved in the suppression of homologous recombination and thus may have a key role in the control of bacterial genetic diversity. Acts as a ribosome collision sensor, splitting the ribosome into its 2 subunits. Detects stalled/collided 70S ribosomes which it binds and splits by an ATP-hydrolysis driven conformational change. Acts upstream of the ribosome quality control system (RQC), a ribosome-associated complex that mediates the extraction of incompletely synthesized nascent chains from stalled ribosomes and their subsequent degradation. Probably generates substrates for RQC. The sequence is that of Endonuclease MutS2 from Leuconostoc citreum (strain KM20).